The following is a 432-amino-acid chain: uncharacterized protein (432 aa).

Disordered stretches follow at residues 37–61 (DGIG…SADC), 127–151 (RDHD…DTRY), and 298–378 (SVSS…NHQC). The span at 312-335 (DSSTLANTQGFREDQSQQQHTPSP) shows a compositional bias: polar residues. Positions 341 to 366 (SSLSHQFHQSIHQSHQHHQSIYQSQH) are enriched in low complexity.

This is an uncharacterized protein from Arabidopsis thaliana (Mouse-ear cress).